The primary structure comprises 132 residues: Small ribosomal subunit protein uS8 (132 aa).

Belongs to the universal ribosomal protein uS8 family. In terms of assembly, part of the 30S ribosomal subunit. Contacts proteins S5 and S12.

Its function is as follows. One of the primary rRNA binding proteins, it binds directly to 16S rRNA central domain where it helps coordinate assembly of the platform of the 30S subunit. This chain is Small ribosomal subunit protein uS8, found in Rickettsia canadensis (strain McKiel).